Consider the following 700-residue polypeptide: Elongation factor G (700 aa).

In terms of domain architecture, tr-type G spans 8-290 (ERYRNIGISA…AVVEYLPAPT (283 aa)). GTP-binding positions include 17 to 24 (AHIDAGKT), 88 to 92 (DTPGH), and 142 to 145 (NKMD).

This sequence belongs to the TRAFAC class translation factor GTPase superfamily. Classic translation factor GTPase family. EF-G/EF-2 subfamily.

The protein localises to the cytoplasm. Catalyzes the GTP-dependent ribosomal translocation step during translation elongation. During this step, the ribosome changes from the pre-translocational (PRE) to the post-translocational (POST) state as the newly formed A-site-bound peptidyl-tRNA and P-site-bound deacylated tRNA move to the P and E sites, respectively. Catalyzes the coordinated movement of the two tRNA molecules, the mRNA and conformational changes in the ribosome. This is Elongation factor G from Haemophilus influenzae (strain 86-028NP).